The sequence spans 124 residues: UPF0482 protein YPK_1977 (124 aa).

Positions 1 to 32 (MMKINNLPRLIRAFLPATLLMLPLVWQTPALA) are cleaved as a signal peptide. The segment at 47-69 (GGNNDPMSKEQARQSQQQWDETN) is disordered.

It belongs to the UPF0482 family.

This chain is UPF0482 protein YPK_1977, found in Yersinia pseudotuberculosis serotype O:3 (strain YPIII).